Reading from the N-terminus, the 286-residue chain is Neuferricin homolog (286 aa).

The N-terminal stretch at 1–23 is a signal peptide; that stretch reads MFGFVKYLFKLQFLFILAAVLAG. The Cytochrome b5 heme-binding domain maps to 61–145; that stretch reads ATVLTSAELS…KPNDLLGLAN (85 aa). Positions 176–200 form a coiled coil; it reads HKYLALLEQAQIAKAEVDELRSKYP.

The protein belongs to the cytochrome b5 family. MAPR subfamily.

Its subcellular location is the secreted. Its function is as follows. Heme-binding protein. This Drosophila pseudoobscura pseudoobscura (Fruit fly) protein is Neuferricin homolog.